The primary structure comprises 617 residues: ATP-dependent zinc metalloprotease FtsH (617 aa).

The Cytoplasmic portion of the chain corresponds to 1-7; that stretch reads MKIPFDR. Residues 8 to 28 traverse the membrane as a helical segment; the sequence is WLGWPTLLLLLLGLWLLGSSL. Residues 29–102 are Periplasmic-facing; sequence RDQRTVEAVP…VSYRRVRESN (74 aa). Residues 103-123 form a helical membrane-spanning segment; it reads WLSQLLSWMAGPLLLLGFWYF. The Cytoplasmic segment spans residues 124–617; that stretch reads MSRRIDGQQG…GRPAAIRQVA (494 aa). 198–205 contacts ATP; it reads GPTGTGKT. Position 421 (histidine 421) interacts with Zn(2+). Glutamate 422 is an active-site residue. Histidine 425 and aspartate 498 together coordinate Zn(2+).

This sequence in the central section; belongs to the AAA ATPase family. In the C-terminal section; belongs to the peptidase M41 family. Homohexamer. The cofactor is Zn(2+).

It is found in the cell inner membrane. Acts as a processive, ATP-dependent zinc metallopeptidase for both cytoplasmic and membrane proteins. Plays a role in the quality control of integral membrane proteins. This chain is ATP-dependent zinc metalloprotease FtsH, found in Methylibium petroleiphilum (strain ATCC BAA-1232 / LMG 22953 / PM1).